We begin with the raw amino-acid sequence, 111 residues long: Probable 4-amino-4-deoxy-L-arabinose-phosphoundecaprenol flippase subunit ArnE (111 aa).

At 1-35 (MIWLTLVFASLLSVAGQLCQKQATCFAAVNKRRKH) the chain is on the cytoplasmic side. Residues 36 to 56 (IVLWLGLALACLGLAMVLWLL) form a helical membrane-spanning segment. Residues 40–109 (LGLALACLGL…IIGGIVILGS (70 aa)) form the EamA domain. Residues 57–60 (VLQN) are Periplasmic-facing. A helical membrane pass occupies residues 61–81 (VPVGIAYPMLSLNFVWVTLAA). Residues 82 to 87 (VKLWHE) lie on the Cytoplasmic side of the membrane. Residues 88 to 108 (PVSLRHWCGVAFIIGGIVILG) traverse the membrane as a helical segment. The Periplasmic portion of the chain corresponds to 109-111 (STV).

Belongs to the ArnE family. In terms of assembly, heterodimer of ArnE and ArnF.

It localises to the cell inner membrane. It participates in bacterial outer membrane biogenesis; lipopolysaccharide biosynthesis. Its function is as follows. Translocates 4-amino-4-deoxy-L-arabinose-phosphoundecaprenol (alpha-L-Ara4N-phosphoundecaprenol) from the cytoplasmic to the periplasmic side of the inner membrane. This is Probable 4-amino-4-deoxy-L-arabinose-phosphoundecaprenol flippase subunit ArnE from Escherichia coli (strain UTI89 / UPEC).